The sequence spans 176 residues: Adipose-secreted signaling protein (176 aa).

The disordered stretch occupies residues 1-30 (MATAGKGSKGKGTGVRFTPEGTQGHPQEGT). A compositionally biased stretch (polar residues) spans 20–30 (EGTQGHPQEGT).

It belongs to the ADISSP family.

May be involved in thermogenesis and glucose homeostasis. The protein is Adipose-secreted signaling protein of Taeniopygia guttata (Zebra finch).